Here is a 94-residue protein sequence, read N- to C-terminus: DNA-directed RNA polymerase subunit omega (94 aa).

It belongs to the RNA polymerase subunit omega family. As to quaternary structure, consists of a sigma factor and the RNAP core enzyme which is composed of 2 alpha chains, 1 beta chain, 1 beta' chain and 1 subunit omega.

It carries out the reaction RNA(n) + a ribonucleoside 5'-triphosphate = RNA(n+1) + diphosphate. In terms of biological role, promotes RNA polymerase assembly. Latches the N- and C-terminal regions of the beta' subunit thereby facilitating its interaction with the beta and alpha subunits. In Shewanella violacea (strain JCM 10179 / CIP 106290 / LMG 19151 / DSS12), this protein is DNA-directed RNA polymerase subunit omega.